The chain runs to 292 residues: tRNA-cytidine(32) 2-sulfurtransferase (292 aa).

A PP-loop motif motif is present at residues 53–58 (SGGKDS). [4Fe-4S] cluster-binding residues include Cys128, Cys131, and Cys219.

Belongs to the TtcA family. In terms of assembly, homodimer. Requires Mg(2+) as cofactor. It depends on [4Fe-4S] cluster as a cofactor.

The protein resides in the cytoplasm. The enzyme catalyses cytidine(32) in tRNA + S-sulfanyl-L-cysteinyl-[cysteine desulfurase] + AH2 + ATP = 2-thiocytidine(32) in tRNA + L-cysteinyl-[cysteine desulfurase] + A + AMP + diphosphate + H(+). Its pathway is tRNA modification. Its function is as follows. Catalyzes the ATP-dependent 2-thiolation of cytidine in position 32 of tRNA, to form 2-thiocytidine (s(2)C32). The sulfur atoms are provided by the cysteine/cysteine desulfurase (IscS) system. The sequence is that of tRNA-cytidine(32) 2-sulfurtransferase from Cereibacter sphaeroides (strain ATCC 17029 / ATH 2.4.9) (Rhodobacter sphaeroides).